The chain runs to 722 residues: MAKEEGTSVEPRQRKKQRTSGSQEAKAEKIRRTPAPERAPKYVSFQRFAKIVIGCLAAVISGMMHVFYLSAYHERKFWFSNRQELEREITFQGDSAIYYSYYKDMLKAPSFERGVYELTHNNKTISLKTINAMQQMSLYPELIASVLYQATGSNEVIEPVYFYIGIVFGLQGMYVTALFVTSWLMSGTWLAGMLTVAWFLINRVDTTRIEYSIPLRENWALPYFACQVAALTGYLKRNLNTYAERFCYLLLSTSTYTFMMVWEYSHYVLFLQAVSLLLLDIFSVEQSDKVYEVYKVYIFSLFLGYLLQFENPALLVSPLLSLVGAFMLVKCLQLNGKKGTFVAKVIKVFEFYLLCTLPVTLNLIVKMFVPHKENEHVLKFLEVKFGLNMTKNFTLNWLLCQESLQAPSQDFFFRLTQSSLLPFYVLVLIICLLSMTQVFFRRMSGKSKKETVTLEDGRIGERPEIIYHVIHTLLLGSLAMLMEGLKFIWTPYVCMLAAFGVCSPELWMTLLKWLRLRTVHPMLLALILSMAVPTIIGLSLWKEFFPRLITELTELQEFYDPDTVELMTWIKRQAPVAAVFAGSPQLMGVIKLCTGWTVTSLPLYSDDDLLQRNENIYQIYSKRSAEDIYKILTSYKANYLIVEDAICNELGTTRGCRVKDLLDIANGHVVFEEGDKLTYSKYGRFCHEVKINYSPYVNYFTRVYWNRSYFVYKVNTVISFQS.

The interval 1–34 (MAKEEGTSVEPRQRKKQRTSGSQEAKAEKIRRTP) is disordered. Alanine 2 carries the post-translational modification N-acetylalanine. Over residues 25–34 (AKAEKIRRTP) the composition is skewed to basic and acidic residues. 12 helical membrane-spanning segments follow: residues 51–71 (IVIG…YLSA), 160–177 (VYFY…YVTA), 183–201 (WLMS…WFLI), 246–262 (FCYL…MMVW), 268–284 (VLFL…IFSV), 291–307 (YEVY…GYLL), 313–331 (ALLV…LVKC), 351–369 (FYLL…KMFV), 420–440 (LLPF…QVFF), 465–485 (IIYH…MEGL), 487–507 (FIWT…PELW), and 521–541 (PMLL…LSLW).

Belongs to the dpy-19 family.

It is found in the membrane. Probable C-mannosyltransferase that mediates C-mannosylation of tryptophan residues on target proteins. This chain is Probable C-mannosyltransferase DPY19L4 (Dpy19l4), found in Mus musculus (Mouse).